A 66-amino-acid polypeptide reads, in one-letter code: Large ribosomal subunit protein bL35 (66 aa).

Belongs to the bacterial ribosomal protein bL35 family.

This is Large ribosomal subunit protein bL35 from Treponema pallidum (strain Nichols).